We begin with the raw amino-acid sequence, 70 residues long: Protein SlyX homolog (70 aa).

It belongs to the SlyX family.

The chain is Protein SlyX homolog from Shewanella pealeana (strain ATCC 700345 / ANG-SQ1).